The sequence spans 139 residues: Mitochondrial intermembrane space import and assembly protein 40 (139 aa).

3 disulfide bridges follow: Cys-53–Cys-55, Cys-64–Cys-97, and Cys-74–Cys-87. Residues 61–105 (SGPCGEQFKSAFSCFHYSQEEIKGSDCLDQFRAMQECMQKYPDIY) enclose the CHCH domain. 2 consecutive short sequence motifs (cx9C motif) follow at residues 64–74 (CGEQFKSAFSC) and 87–97 (CLDQFRAMQEC). The tract at residues 102 to 139 (PDIYPQEDDEDEAEKEKQNKEAEAFSTETSDTKEESSS) is disordered. Residues 115-124 (EKEKQNKEAE) are compositionally biased toward basic and acidic residues.

Monomer. Can form homooligomers.

It localises to the mitochondrion intermembrane space. Central component of a redox-sensitive mitochondrial intermembrane space import machinery which is required for the biogenesis of respiratory chain complexes. Functions as chaperone and catalyzes the formation of disulfide bonds in substrate proteins, such as COX17 or MICU1. Required for the import and folding of small cysteine-containing proteins (small Tim) in the mitochondrial intermembrane space (IMS). Precursor proteins to be imported into the IMS are translocated in their reduced form into the mitochondria. The polypeptide is Mitochondrial intermembrane space import and assembly protein 40 (chchd4) (Xenopus tropicalis (Western clawed frog)).